A 323-amino-acid polypeptide reads, in one-letter code: Serine/threonine-protein phosphatase PP1 (323 aa).

Mn(2+)-binding residues include aspartate 63, histidine 65, aspartate 91, and asparagine 123. Histidine 124 serves as the catalytic Proton donor. The Mn(2+) site is built by histidine 172 and histidine 247.

This sequence belongs to the PPP phosphatase family. PP-1 subfamily. Mn(2+) serves as cofactor.

It carries out the reaction O-phospho-L-seryl-[protein] + H2O = L-seryl-[protein] + phosphate. It catalyses the reaction O-phospho-L-threonyl-[protein] + H2O = L-threonyl-[protein] + phosphate. Plays an important role in the control of mitosis by reversing the action of the nimA kinase. The chain is Serine/threonine-protein phosphatase PP1 (bimG) from Emericella nidulans (strain FGSC A4 / ATCC 38163 / CBS 112.46 / NRRL 194 / M139) (Aspergillus nidulans).